The following is a 144-amino-acid chain: Intraflagellar transport protein 25 homolog (144 aa).

Ca(2+) contacts are provided by N29, D32, and T37.

Belongs to the IFT25 family. As to quaternary structure, component of the IFT complex B, at least composed of IFT20, IFT22, IFT25, IFT27, IFT46, IFT52, TRAF3IP1/IFT54, IFT57, IFT74, IFT80, IFT81, and IFT88. Interacts with IFT27. Interacts with IFT88. Detected in placenta.

The protein localises to the cell projection. It localises to the cilium. Functionally, component of the IFT complex B required for sonic hedgehog/SHH signaling. May mediate transport of SHH components: required for the export of SMO and PTCH1 receptors out of the cilium and the accumulation of GLI2 at the ciliary tip in response to activation of the SHH pathway, suggesting it is involved in the dynamic transport of SHH signaling molecules within the cilium. Not required for ciliary assembly. Its role in intraflagellar transport is mainly seen in tissues rich in ciliated cells such as kidney and testis. Essential for male fertility, spermiogenesis and sperm flagella formation. Plays a role in the early development of the kidney. May be involved in the regulation of ureteric bud initiation. The sequence is that of Intraflagellar transport protein 25 homolog from Homo sapiens (Human).